Consider the following 207-residue polypeptide: 5-amino-6-(5-phosphoribosylamino)uracil reductase (207 aa).

S6 contributes to the substrate binding site. Residue W8 participates in NADP(+) binding. Residue R22 coordinates substrate. D38 lines the NADP(+) pocket. Positions 42 and 45 each coordinate substrate. An NADP(+)-binding site is contributed by S72. E137 lines the substrate pocket.

It belongs to the HTP reductase family.

It catalyses the reaction 5-amino-6-(5-phospho-D-ribitylamino)uracil + NADP(+) = 5-amino-6-(5-phospho-D-ribosylamino)uracil + NADPH + H(+). The protein operates within cofactor biosynthesis; riboflavin biosynthesis; 5-amino-6-(D-ribitylamino)uracil from GTP: step 3/4. This Buchnera aphidicola subsp. Acyrthosiphon pisum (strain APS) (Acyrthosiphon pisum symbiotic bacterium) protein is 5-amino-6-(5-phosphoribosylamino)uracil reductase (ribD2).